Here is a 413-residue protein sequence, read N- to C-terminus: DNA primase DnaG (413 aa).

The Toprim domain maps to 168-246 (PNLIIVEGRA…KIDYVARAPV (79 aa)). The Mg(2+) site is built by Glu-174, Asp-219, and Asp-221.

The protein belongs to the archaeal DnaG primase family. As to quaternary structure, forms a ternary complex with MCM helicase and DNA. Component of the archaeal exosome complex. Mg(2+) is required as a cofactor.

The catalysed reaction is ssDNA + n NTP = ssDNA/pppN(pN)n-1 hybrid + (n-1) diphosphate.. Functionally, RNA polymerase that catalyzes the synthesis of short RNA molecules used as primers for DNA polymerase during DNA replication. Also part of the exosome, which is a complex involved in RNA degradation. Acts as a poly(A)-binding protein that enhances the interaction between heteromeric, adenine-rich transcripts and the exosome. This chain is DNA primase DnaG, found in Metallosphaera sedula (strain ATCC 51363 / DSM 5348 / JCM 9185 / NBRC 15509 / TH2).